A 255-amino-acid chain; its full sequence is Triosephosphate isomerase (255 aa).

Residue 9–11 (NWK) coordinates substrate. The active-site Electrophile is His-95. Catalysis depends on Glu-167, which acts as the Proton acceptor. Residues Gly-173, Ser-212, and 233 to 234 (GG) contribute to the substrate site.

It belongs to the triosephosphate isomerase family. Homodimer.

The protein localises to the cytoplasm. The catalysed reaction is D-glyceraldehyde 3-phosphate = dihydroxyacetone phosphate. It functions in the pathway carbohydrate biosynthesis; gluconeogenesis. It participates in carbohydrate degradation; glycolysis; D-glyceraldehyde 3-phosphate from glycerone phosphate: step 1/1. In terms of biological role, involved in the gluconeogenesis. Catalyzes stereospecifically the conversion of dihydroxyacetone phosphate (DHAP) to D-glyceraldehyde-3-phosphate (G3P). The chain is Triosephosphate isomerase from Salmonella dublin (strain CT_02021853).